The chain runs to 80 residues: MIKDFNESNIRNIRSSGISTKKLEDFFSINQYPNKNEIKDFANYYQCDETKIKNWFKGKRDRLKKKSSNNEKSGNKFYFK.

Residues 8 to 67 (SNIRNIRSSGISTKKLEDFFSINQYPNKNEIKDFANYYQCDETKIKNWFKGKRDRLKKKS) constitute a DNA-binding region (homeobox). The interval 60 to 80 (RDRLKKKSSNNEKSGNKFYFK) is disordered. Low complexity predominate over residues 70–80 (NEKSGNKFYFK).

The protein localises to the nucleus. Putative transcription factor. The protein is Homeobox protein 7 (hbx7) of Dictyostelium discoideum (Social amoeba).